A 440-amino-acid chain; its full sequence is Protein scalloped (440 aa).

The segment at 32–65 (TEQQAVGPGTIPSPWTPVNAGPPGALGSADTNGS) is disordered. Positions 86 to 162 (SADAEGVWSP…QVLARRKLRE (77 aa)) form a DNA-binding region, TEA.

In terms of assembly, the C-terminus of sd interacts with the C-terminal serine-rich protein domain of vg, to form a complex which acts as a selector for wing development. Interacts (via C-terminus) with yki (via N-terminus) and this interaction enhances its transcriptional activity. In terms of tissue distribution, subset of neuroblasts in the central nervous system and in the peripheral sense organs of the embryo. Expressed in the developing wing primordia initially along the D/V wing boundary, and by the late third larval instar, maximal expression is seen in cells at the D/V wing disk boundary. Less expression in cells located farther from this boundary. Also expressed in wing progenitor cells.

It is found in the nucleus. In terms of biological role, transcription factor which plays a key role in the Hippo/SWH (Sav/Wts/Hpo) signaling pathway, a signaling pathway that plays a pivotal role in organ size control and tumor suppression by restricting proliferation and promoting apoptosis. The core of this pathway is composed of a kinase cascade wherein Hippo (Hpo), in complex with its regulatory protein Salvador (Sav), phosphorylates and activates Warts (Wts) in complex with its regulatory protein Mats, which in turn phosphorylates and inactivates the Yorkie (Yki) oncoprotein. The Hippo/SWH signaling pathway inhibits the activity of the transcriptional complex formed by Scalloped (sd) and Yki and the target genes of this pathway include cyclin-E (cycE), diap1 and bantam. Sd promotes nuclear localization of Yki. Involved in the regulation of cell-specific gene expression during development, particularly in the differentiation of the nervous system. When in combination with vestigial (vg) it acts as a transcriptional activation complex that regulates gene expression in the wing. Binding to vg switches the DNA target selectivity of sd. Required autonomously for cell proliferation and viability within the wing blade. Required for proper sensory organ precursor (SOP) differentiation at the wing margin; required for correct expression of sens. This is Protein scalloped (sd) from Drosophila melanogaster (Fruit fly).